The primary structure comprises 377 residues: DNA methyltransferase CcrM (377 aa).

The 103-residue stretch at 271-373 (LGKAELTVMT…LRKIIREQMA (103 aa)) folds into the RAMA domain.

This sequence belongs to the N(4)/N(6)-methyltransferase family.

The catalysed reaction is a 2'-deoxyadenosine in DNA + S-adenosyl-L-methionine = an N(6)-methyl-2'-deoxyadenosine in DNA + S-adenosyl-L-homocysteine + H(+). A beta subtype methylase that recognizes the double-stranded sequence 5'-GANTC-3' and methylates on A-2 on both strands. Overexpression from a moderate-copy number plasmid (10-12 copies/cell) leads to enlarged, branched cells, many with 3-5 genome equivalents. Contributes to the accurate cell-cycle control of DNA replication and cellular morphology. This is DNA methyltransferase CcrM from Brucella abortus (strain 2308).